The primary structure comprises 512 residues: Kynurenine 3-monooxygenase (512 aa).

It belongs to the aromatic-ring hydroxylase family. KMO subfamily. The cofactor is FAD.

Its subcellular location is the mitochondrion outer membrane. It carries out the reaction L-kynurenine + NADPH + O2 + H(+) = 3-hydroxy-L-kynurenine + NADP(+) + H2O. It functions in the pathway cofactor biosynthesis; NAD(+) biosynthesis; quinolinate from L-kynurenine: step 1/3. Its function is as follows. Catalyzes the hydroxylation of L-kynurenine (L-Kyn) to form 3-hydroxy-L-kynurenine (L-3OHKyn). Required for synthesis of quinolinic acid. This is Kynurenine 3-monooxygenase (bna4) from Aspergillus fumigatus (strain ATCC MYA-4609 / CBS 101355 / FGSC A1100 / Af293) (Neosartorya fumigata).